Here is a 288-residue protein sequence, read N- to C-terminus: Acetyl-coenzyme A carboxylase carboxyl transferase subunit beta (288 aa).

In terms of domain architecture, CoA carboxyltransferase N-terminal spans 34–288; it reads LWVKCSRCNE…ANILSLHGTN (255 aa). Zn(2+) contacts are provided by cysteine 38, cysteine 41, cysteine 57, and cysteine 60. The C4-type zinc-finger motif lies at 38-60; it reads CSRCNEILYTKELDKNFKVCHKC.

Belongs to the AccD/PCCB family. In terms of assembly, acetyl-CoA carboxylase is a heterohexamer composed of biotin carboxyl carrier protein (AccB), biotin carboxylase (AccC) and two subunits each of ACCase subunit alpha (AccA) and ACCase subunit beta (AccD). Requires Zn(2+) as cofactor.

The protein localises to the cytoplasm. The catalysed reaction is N(6)-carboxybiotinyl-L-lysyl-[protein] + acetyl-CoA = N(6)-biotinyl-L-lysyl-[protein] + malonyl-CoA. The protein operates within lipid metabolism; malonyl-CoA biosynthesis; malonyl-CoA from acetyl-CoA: step 1/1. In terms of biological role, component of the acetyl coenzyme A carboxylase (ACC) complex. Biotin carboxylase (BC) catalyzes the carboxylation of biotin on its carrier protein (BCCP) and then the CO(2) group is transferred by the transcarboxylase to acetyl-CoA to form malonyl-CoA. This chain is Acetyl-coenzyme A carboxylase carboxyl transferase subunit beta, found in Desulforamulus reducens (strain ATCC BAA-1160 / DSM 100696 / MI-1) (Desulfotomaculum reducens).